The sequence spans 972 residues: Aminopeptidase Ey (972 aa).

Residues 2–10 (AAGFFISKS) are Cytoplasmic-facing. The chain crosses the membrane as a helical; Signal-anchor for type II membrane protein span at residues 11 to 31 (VGIVGIVLALGAVATIIALSV). Topologically, residues 32 to 972 (VYAQEKNKSS…AWFRAETASS (941 aa)) are extracellular. The segment at 33–72 (YAQEKNKSSGGSGGSDTTSTTTASTTTTSTTTASTTAAPN) is cytosolic Ser/Thr-rich junction. A disordered region spans residues 37–77 (KNKSSGGSGGSDTTSTTTASTTTTSTTTASTTAAPNNPWNR). Asn-38 carries N-linked (GlcNAc...) asparagine glycosylation. The segment covering 47–70 (SDTTSTTTASTTTTSTTTASTTAA) has biased composition (low complexity). Residues 73 to 967 (NPWNRWRLPT…KEVVHAWFRA (895 aa)) form a metalloprotease region. 6 N-linked (GlcNAc...) asparagine glycosylation sites follow: Asn-110, Asn-132, Asn-147, Asn-206, Asn-269, and Asn-296. 355–359 (GAMEN) contacts substrate. His-391 is a Zn(2+) binding site. Glu-392 acts as the Proton acceptor in catalysis. Positions 395 and 414 each coordinate Zn(2+). N-linked (GlcNAc...) asparagine glycosylation is found at Asn-513, Asn-574, Asn-584, Asn-628, Asn-684, and Asn-742. A disulfide bridge connects residues Cys-764 and Cys-771. Asn-785 is a glycosylation site (N-linked (GlcNAc...) asparagine). A disulfide bond links Cys-801 and Cys-837.

Belongs to the peptidase M1 family. As to quaternary structure, homodimer. Requires Zn(2+) as cofactor. As to expression, detected in the plasma and granule fractions of egg yolk (at protein level).

The protein localises to the cell membrane. It carries out the reaction Differs from other aminopeptidases in broad specificity for amino acids in the P1 position and the ability to hydrolyze peptides of four or five residues that contain Pro in the P1' position.. Broad specificity aminopeptidase. Degrades a variety of peptides possessing various N-terminal amino acids including hydrophobic, basic and acidic amino acids. Preferentially hydrolyzes small peptides consisting of 4 or 5 amino acids. Hydrolyzes the N-terminal Xaa-Pro bonds in the chicken brain peptide Leu-Pro-Leu-Arg-PheNH2, the substance P fragment Arg-Pro-Lys-Pro and the bradykinin fragment Arg-Pro-Pro-Gly-Phe. Hydrolyzes the N-formylated peptides fMet-Leu-Phe, fMet-Ala-Gly-Ser-Glu and fMet-Nle-Leu-Phe-Nle-Tyr-Lys, but does not hydrolyze peptides with acetylation or pyroglutamic acid at N-terminus. Does not hydrolyze large peptides such as complete substance P, bradykinin or schistoFLRFamide. This is Aminopeptidase Ey (ANPEP) from Gallus gallus (Chicken).